A 362-amino-acid chain; its full sequence is tRNA N6-adenosine threonylcarbamoyltransferase (362 aa).

His-120 and His-124 together coordinate Fe cation. Residues 142–146, Asp-175, Gly-188, and Asn-288 each bind substrate; that span reads LASGG. Fe cation is bound at residue Asp-316. A compositionally biased stretch (basic and acidic residues) spans 342–351; sequence RPRWPLDPDA. The disordered stretch occupies residues 342-362; sequence RPRWPLDPDAPKAAGAGGVKA.

The protein belongs to the KAE1 / TsaD family. Fe(2+) serves as cofactor.

The protein localises to the cytoplasm. It catalyses the reaction L-threonylcarbamoyladenylate + adenosine(37) in tRNA = N(6)-L-threonylcarbamoyladenosine(37) in tRNA + AMP + H(+). Its function is as follows. Required for the formation of a threonylcarbamoyl group on adenosine at position 37 (t(6)A37) in tRNAs that read codons beginning with adenine. Is involved in the transfer of the threonylcarbamoyl moiety of threonylcarbamoyl-AMP (TC-AMP) to the N6 group of A37, together with TsaE and TsaB. TsaD likely plays a direct catalytic role in this reaction. In Rhodospirillum rubrum (strain ATCC 11170 / ATH 1.1.1 / DSM 467 / LMG 4362 / NCIMB 8255 / S1), this protein is tRNA N6-adenosine threonylcarbamoyltransferase.